An 882-amino-acid polypeptide reads, in one-letter code: Valine--tRNA ligase (882 aa).

A 'HIGH' region motif is present at residues 42–52 (PNVTGKLHLGH). A 'KMSKS' region motif is present at residues 522–526 (KMSKS). An ATP-binding site is contributed by lysine 525. Positions 849–873 (KIEIEKKKYESYCKQYKKLLESKNN) form a coiled coil.

It belongs to the class-I aminoacyl-tRNA synthetase family. ValS type 1 subfamily. Monomer.

It is found in the cytoplasm. The catalysed reaction is tRNA(Val) + L-valine + ATP = L-valyl-tRNA(Val) + AMP + diphosphate. Functionally, catalyzes the attachment of valine to tRNA(Val). As ValRS can inadvertently accommodate and process structurally similar amino acids such as threonine, to avoid such errors, it has a 'posttransfer' editing activity that hydrolyzes mischarged Thr-tRNA(Val) in a tRNA-dependent manner. The protein is Valine--tRNA ligase of Onion yellows phytoplasma (strain OY-M).